We begin with the raw amino-acid sequence, 395 residues long: Transcription termination/antitermination protein NusA (395 aa).

The S1 motif domain maps to 137 to 201 (NSVLMGQVIL…TKKGLLLELS (65 aa)). 2 consecutive KH domains span residues 243 to 291 (SHNS…TLAL) and 331 to 378 (KVRL…NENE).

Belongs to the NusA family. As to quaternary structure, monomer. Binds directly to the core enzyme of the DNA-dependent RNA polymerase and to nascent RNA.

It localises to the cytoplasm. Its function is as follows. Participates in both transcription termination and antitermination. The polypeptide is Transcription termination/antitermination protein NusA (Helicobacter pylori (strain J99 / ATCC 700824) (Campylobacter pylori J99)).